The sequence spans 37 residues: Large ribosomal subunit protein bL36 (37 aa).

The protein belongs to the bacterial ribosomal protein bL36 family.

The protein is Large ribosomal subunit protein bL36 of Staphylococcus aureus (strain Mu3 / ATCC 700698).